A 129-amino-acid chain; its full sequence is Snaclec coagulation factor IX-binding protein subunit A (129 aa).

Residues 1-129 (DCPSGWSSYE…GQQNPFVCEA (129 aa)) enclose the C-type lectin domain. Disulfide bonds link Cys-2/Cys-13, Cys-30/Cys-127, and Cys-102/Cys-119. Ca(2+)-binding residues include Ser-41, Glu-43, and Glu-47. Glu-128 is a Ca(2+) binding site.

Belongs to the snaclec family. In terms of assembly, heterodimer of subunits A and B; disulfide-linked. In terms of tissue distribution, expressed by the venom gland.

The protein resides in the secreted. Functionally, anticoagulant protein which binds to the gamma-carboxyglutamic acid-domain regions of factor IX (F9) (but not factor X) in the presence of calcium with a 1 to 1 stoichiometry. This is Snaclec coagulation factor IX-binding protein subunit A from Protobothrops flavoviridis (Habu).